The following is a 678-amino-acid chain: AAC-rich mRNA clone AAC4 protein (678 aa).

The segment covering 55–73 (NNNNNNNNNNNNNNNNNNN) has biased composition (low complexity). Residues 55–75 (NNNNNNNNNNNNNNNNNNNTS) are disordered. Residues 243–263 (IIPIYHEIILVLCNWLVVAFY) form a helical membrane-spanning segment. Residues 318–346 (NNNNNNNNNNNNNNNNNNNNNNNNKTNNN) show a composition bias toward low complexity. A disordered region spans residues 318-347 (NNNNNNNNNNNNNNNNNNNNNNNNKTNNNQ).

The protein localises to the membrane. The chain is AAC-rich mRNA clone AAC4 protein (AAC4) from Dictyostelium discoideum (Social amoeba).